Here is a 343-residue protein sequence, read N- to C-terminus: MSLSQPSTQSRVKVKSFLTGLQDDICKGLENIDGEGTFQEESWERPEGGGGRSRVMREGRIFEQGGVNFSEVHGEELPPSILNQRPEAKGHKWFATGTSMVLHPRNPYIPTVHLNYRYFEAGPVWWFGGGADLTPYYPYLKDTRHFHKIHQEACDSINPKLHKVFKPWCDEYFFLKHRNESRGVGGIFFDYQDGSGKLYKGQNPNGLSSIASKELGEYKLSWEDLFSLAKACGNAFLPSYIPIIEKRHNQTFSDRERNFQLYRRGRYVEFNLVWDRGTIFGLQTNGRTESILMSLPPLARWEYGFKAPPESRESLLTDVFTKPQEWFTDESLEEKCRPHHAVD.

Serine 99 serves as a coordination point for substrate. Residues histidine 103 and histidine 113 each coordinate a divalent metal cation. The active-site Proton donor is histidine 113. Asparagine 115–arginine 117 contributes to the substrate binding site. A divalent metal cation is bound by residues histidine 147 and histidine 177. The segment at tyrosine 267–glutamate 302 is important for dimerization.

It belongs to the aerobic coproporphyrinogen-III oxidase family. As to quaternary structure, homodimer. The cofactor is a divalent metal cation.

The protein localises to the cytoplasm. The enzyme catalyses coproporphyrinogen III + O2 + 2 H(+) = protoporphyrinogen IX + 2 CO2 + 2 H2O. The protein operates within porphyrin-containing compound metabolism; protoporphyrin-IX biosynthesis; protoporphyrinogen-IX from coproporphyrinogen-III (O2 route): step 1/1. Functionally, involved in the heme and chlorophyll biosynthesis. Catalyzes the aerobic oxidative decarboxylation of propionate groups of rings A and B of coproporphyrinogen-III to yield the vinyl groups in protoporphyrinogen-IX. This Prochlorococcus marinus (strain SARG / CCMP1375 / SS120) protein is Oxygen-dependent coproporphyrinogen-III oxidase.